The primary structure comprises 165 residues: Large ribosomal subunit protein bL17 (165 aa).

Basic and acidic residues predominate over residues 138-158; it reads QEKREAQEKAREEKRTARKSD. Positions 138–165 are disordered; that stretch reads QEKREAQEKAREEKRTARKSDSVPARKK.

This sequence belongs to the bacterial ribosomal protein bL17 family. Part of the 50S ribosomal subunit. Contacts protein L32.

The sequence is that of Large ribosomal subunit protein bL17 from Leptospira borgpetersenii serovar Hardjo-bovis (strain JB197).